The following is a 343-amino-acid chain: uncharacterized protein (343 aa).

3 disordered regions span residues 1–25 (MSSK…LSGT), 62–119 (KNIR…DCSD), and 169–188 (NPKI…TKKS). The span at 62–71 (KNIRQFKKSQ) shows a compositional bias: basic residues. Basic and acidic residues predominate over residues 72–81 (NKTDTEKSGE). Over residues 83–107 (NDSDYSDYSDNSDDVDDLDDVDDLN) the composition is skewed to acidic residues.

This is an uncharacterized protein from Acanthamoeba polyphaga (Amoeba).